The sequence spans 196 residues: Recombination protein RecR (196 aa).

The segment at 57-72 (CERCHTFTQADICATC) adopts a C4-type zinc-finger fold. The region spanning 80–175 (SKLCVVETPA…RLTRLARGVP (96 aa)) is the Toprim domain.

The protein belongs to the RecR family.

Its function is as follows. May play a role in DNA repair. It seems to be involved in an RecBC-independent recombinational process of DNA repair. It may act with RecF and RecO. The sequence is that of Recombination protein RecR from Albidiferax ferrireducens (strain ATCC BAA-621 / DSM 15236 / T118) (Rhodoferax ferrireducens).